Reading from the N-terminus, the 859-residue chain is Leucine--tRNA ligase (859 aa).

The 'HIGH' region signature appears at 42-52 (PYPSGRLHMGH). The short motif at 618-622 (KMSKS) is the 'KMSKS' region element. Lysine 621 provides a ligand contact to ATP.

Belongs to the class-I aminoacyl-tRNA synthetase family.

It localises to the cytoplasm. It carries out the reaction tRNA(Leu) + L-leucine + ATP = L-leucyl-tRNA(Leu) + AMP + diphosphate. The polypeptide is Leucine--tRNA ligase (Shewanella baltica (strain OS185)).